Reading from the N-terminus, the 881-residue chain is Ribonucleoside-diphosphate reductase large subunit (881 aa).

Residues 69 to 160 (TIYLDHNGSI…MTNLHDNTSD (92 aa)) enclose the ATP-cone domain. Substrate contacts are provided by residues Thr271, 286-287 (SC), Gly315, 493-497 (NLCCE), and 675-679 (PTAST). Cysteines 287 and 510 form a disulfide. Asn493 functions as the Proton acceptor in the catalytic mechanism. The active-site Cysteine radical intermediate is Cys495. The active-site Proton acceptor is the Glu497.

This sequence belongs to the ribonucleoside diphosphate reductase large chain family. As to quaternary structure, heterotetramer composed of a homodimer of the large subunit (R1) and a homodimer of the small subunit (R2). Larger multisubunit protein complex are also active, composed of (R1)n(R2)n.

The catalysed reaction is a 2'-deoxyribonucleoside 5'-diphosphate + [thioredoxin]-disulfide + H2O = a ribonucleoside 5'-diphosphate + [thioredoxin]-dithiol. Its activity is regulated as follows. Under complex allosteric control mediated by deoxynucleoside triphosphates and ATP binding. The type of nucleotide bound at the specificity site determines substrate preference. It seems probable that ATP makes the enzyme reduce CDP and UDP, dGTP favors ADP reduction and dTTP favors GDP reduction. In terms of biological role, ribonucleoside-diphosphate reductase holoenzyme provides the precursors necessary for viral DNA synthesis. Allows virus growth in non-dividing cells. Catalyzes the biosynthesis of deoxyribonucleotides from the corresponding ribonucleotides. The protein is Ribonucleoside-diphosphate reductase large subunit (RNR1) of Acanthamoeba polyphaga mimivirus (APMV).